A 155-amino-acid chain; its full sequence is Ribosomal RNA large subunit methyltransferase H (155 aa).

S-adenosyl-L-methionine-binding positions include Leu-73, Gly-104, and 123–128 (LSPLTL).

This sequence belongs to the RNA methyltransferase RlmH family. Homodimer.

The protein localises to the cytoplasm. It catalyses the reaction pseudouridine(1915) in 23S rRNA + S-adenosyl-L-methionine = N(3)-methylpseudouridine(1915) in 23S rRNA + S-adenosyl-L-homocysteine + H(+). Its function is as follows. Specifically methylates the pseudouridine at position 1915 (m3Psi1915) in 23S rRNA. This is Ribosomal RNA large subunit methyltransferase H from Stutzerimonas stutzeri (strain A1501) (Pseudomonas stutzeri).